A 246-amino-acid polypeptide reads, in one-letter code: Heavy metal-associated isoprenylated plant protein 8 (246 aa).

Positions 1–31 are disordered; the sequence is MGKNKQNGESDNKSEKKNQKNGDSSVDKSDK. The HMA 1 domain maps to 35–99; sequence CKEIVLKVYM…RVQKKFSRNA (65 aa). A metal cation-binding residues include cysteine 46 and cysteine 49. A disordered region spans residues 96–122; the sequence is SRNAEMISPKHNPKQDQKEPQQKKESA. Residues 108-122 show a composition bias toward basic and acidic residues; sequence PKQDQKEPQQKKESA. One can recognise an HMA 2 domain in the interval 125 to 189; that stretch reads IKTAILRMNM…IKKKLGKHAE (65 aa). Residues cysteine 136 and cysteine 139 each contribute to the a metal cation site. The disordered stretch occupies residues 191–226; it reads LSQITEKGKDNNKKNNNKKEESDGNKIFSYPPQYSS. Residues 196-214 are compositionally biased toward basic and acidic residues; it reads EKGKDNNKKNNNKKEESDG. At cysteine 243 the chain carries Cysteine methyl ester. The S-farnesyl cysteine moiety is linked to residue cysteine 243. The propeptide at 244–246 is removed in mature form; the sequence is SIM.

The protein belongs to the HIPP family.

Heavy-metal-binding protein. This is Heavy metal-associated isoprenylated plant protein 8 from Arabidopsis thaliana (Mouse-ear cress).